Consider the following 377-residue polypeptide: LIM/homeobox protein Lhx9 (377 aa).

2 LIM zinc-binding domains span residues 50–111 (ALCA…RFSV) and 112–174 (QRCA…LVQG). Disordered stretches follow at residues 228-249 (NEND…QKTK), 309-346 (RQEN…TDLT), and 358-377 (SSLD…TNLF). A DNA-binding region (homeobox) is located at residues 248 to 307 (TKXMRTSFKHHQLRTMKSYFAINHNPDAKDLKQLAQKTGLTKRVLQVWFQNARAKFRRNV). A compositionally biased stretch (low complexity) spans 333 to 346 (LTPPSTATTLTDLT). The segment covering 365–377 (SGSPPQTTLTNLF) has biased composition (polar residues).

The protein localises to the nucleus. May be involved in gonadal development. The sequence is that of LIM/homeobox protein Lhx9 (lhx9) from Psalidodon fasciatus (Banded astyanax).